The primary structure comprises 294 residues: Pyridoxal 5'-phosphate synthase subunit PdxS (294 aa).

Aspartate 24 contacts D-ribose 5-phosphate. Lysine 81 functions as the Schiff-base intermediate with D-ribose 5-phosphate in the catalytic mechanism. Residue glycine 153 coordinates D-ribose 5-phosphate. Arginine 165 lines the D-glyceraldehyde 3-phosphate pocket. D-ribose 5-phosphate contacts are provided by residues glycine 214 and 235-236 (GS).

Belongs to the PdxS/SNZ family. In the presence of PdxT, forms a dodecamer of heterodimers.

It carries out the reaction aldehydo-D-ribose 5-phosphate + D-glyceraldehyde 3-phosphate + L-glutamine = pyridoxal 5'-phosphate + L-glutamate + phosphate + 3 H2O + H(+). Its pathway is cofactor biosynthesis; pyridoxal 5'-phosphate biosynthesis. Catalyzes the formation of pyridoxal 5'-phosphate from ribose 5-phosphate (RBP), glyceraldehyde 3-phosphate (G3P) and ammonia. The ammonia is provided by the PdxT subunit. Can also use ribulose 5-phosphate and dihydroxyacetone phosphate as substrates, resulting from enzyme-catalyzed isomerization of RBP and G3P, respectively. The polypeptide is Pyridoxal 5'-phosphate synthase subunit PdxS (Anoxybacillus flavithermus (strain DSM 21510 / WK1)).